Consider the following 188-residue polypeptide: ATP synthase subunit b (188 aa).

The helical transmembrane segment at 7 to 26 threads the bilayer; sequence TAAAGAMTLFFASMAYASGD.

Belongs to the ATPase B chain family. F-type ATPases have 2 components, F(1) - the catalytic core - and F(0) - the membrane proton channel. F(1) has five subunits: alpha(3), beta(3), gamma(1), delta(1), epsilon(1). F(0) has three main subunits: a(1), b(2) and c(10-14). The alpha and beta chains form an alternating ring which encloses part of the gamma chain. F(1) is attached to F(0) by a central stalk formed by the gamma and epsilon chains, while a peripheral stalk is formed by the delta and b chains.

It is found in the cell inner membrane. In terms of biological role, f(1)F(0) ATP synthase produces ATP from ADP in the presence of a proton or sodium gradient. F-type ATPases consist of two structural domains, F(1) containing the extramembraneous catalytic core and F(0) containing the membrane proton channel, linked together by a central stalk and a peripheral stalk. During catalysis, ATP synthesis in the catalytic domain of F(1) is coupled via a rotary mechanism of the central stalk subunits to proton translocation. Component of the F(0) channel, it forms part of the peripheral stalk, linking F(1) to F(0). This Nitratidesulfovibrio vulgaris (strain DP4) (Desulfovibrio vulgaris) protein is ATP synthase subunit b.